We begin with the raw amino-acid sequence, 252 residues long: 3-deoxy-manno-octulosonate cytidylyltransferase (252 aa).

The protein belongs to the KdsB family.

Its subcellular location is the cytoplasm. It carries out the reaction 3-deoxy-alpha-D-manno-oct-2-ulosonate + CTP = CMP-3-deoxy-beta-D-manno-octulosonate + diphosphate. It functions in the pathway nucleotide-sugar biosynthesis; CMP-3-deoxy-D-manno-octulosonate biosynthesis; CMP-3-deoxy-D-manno-octulosonate from 3-deoxy-D-manno-octulosonate and CTP: step 1/1. It participates in bacterial outer membrane biogenesis; lipopolysaccharide biosynthesis. Functionally, activates KDO (a required 8-carbon sugar) for incorporation into bacterial lipopolysaccharide in Gram-negative bacteria. This Rhodospirillum rubrum (strain ATCC 11170 / ATH 1.1.1 / DSM 467 / LMG 4362 / NCIMB 8255 / S1) protein is 3-deoxy-manno-octulosonate cytidylyltransferase.